Consider the following 642-residue polypeptide: 1-deoxy-D-xylulose-5-phosphate synthase (642 aa).

Thiamine diphosphate is bound by residues His79 and 120-122 (AHS). Position 151 (Asp151) interacts with Mg(2+). Thiamine diphosphate contacts are provided by residues 152–153 (GS), Asn180, Tyr290, and Glu372. Residue Asn180 coordinates Mg(2+).

It belongs to the transketolase family. DXPS subfamily. In terms of assembly, homodimer. Mg(2+) serves as cofactor. It depends on thiamine diphosphate as a cofactor.

The catalysed reaction is D-glyceraldehyde 3-phosphate + pyruvate + H(+) = 1-deoxy-D-xylulose 5-phosphate + CO2. The protein operates within metabolic intermediate biosynthesis; 1-deoxy-D-xylulose 5-phosphate biosynthesis; 1-deoxy-D-xylulose 5-phosphate from D-glyceraldehyde 3-phosphate and pyruvate: step 1/1. Functionally, catalyzes the acyloin condensation reaction between C atoms 2 and 3 of pyruvate and glyceraldehyde 3-phosphate to yield 1-deoxy-D-xylulose-5-phosphate (DXP). The protein is 1-deoxy-D-xylulose-5-phosphate synthase of Beijerinckia indica subsp. indica (strain ATCC 9039 / DSM 1715 / NCIMB 8712).